We begin with the raw amino-acid sequence, 341 residues long: Zinc transporter ZIP11 (341 aa).

Transmembrane regions (helical) follow at residues 12-32, 44-64, 72-92, 193-213, 262-284, 289-306, and 321-341; these read LLGTFFTWGLTAAGAALVFVF, LGFAAGVMLAASYWSLLAPAV, GFGSLAFLPVAIGFTLGAAFV, IALLILAITIHNIPEGLAVGV, FWYGQLSGMVEPLAGVFGAFAVV, ILPYALAFAAGAMVYVIM, and LASWASILGFVVMMSLDVGLG.

Belongs to the ZIP transporter (TC 2.A.5) family.

It localises to the cell membrane. The protein localises to the nucleus. It is found in the cytoplasm. Its subcellular location is the golgi apparatus. It carries out the reaction Zn(2+)(in) = Zn(2+)(out). The enzyme catalyses Cu(2+)(in) = Cu(2+)(out). Its function is as follows. Zinc importer that regulates cytosolic zinc concentrations either via zinc influx from the extracellular compartment or efflux from intracellular organelles such as Golgi apparatus. May transport copper ions as well. The transport mechanism remains to be elucidated. This Bos taurus (Bovine) protein is Zinc transporter ZIP11 (SLC39A11).